The following is a 72-amino-acid chain: Small ribosomal subunit protein eS31 (72 aa).

Zn(2+) contacts are provided by Cys-32, Cys-35, Cys-51, and Cys-54. Residues 32-54 (CPRCGSVMAYHKEPVPRWHCGKC) form a C4-type zinc finger.

Belongs to the eukaryotic ribosomal protein eS31 family. In terms of assembly, part of the 30S ribosomal subunit. The cofactor is Zn(2+).

In Caldivirga maquilingensis (strain ATCC 700844 / DSM 13496 / JCM 10307 / IC-167), this protein is Small ribosomal subunit protein eS31.